The primary structure comprises 624 residues: Chaperone protein HtpG (624 aa).

An a; substrate-binding region spans residues 1–336 (MKTQKKEVYN…SSDLPLNISR (336 aa)). A b region spans residues 337-552 (EILQDNSITE…STEMTTQMAK (216 aa)). Residues 553–624 (LFSAAGQSVP…ISRMNKLLIK (72 aa)) are c.

This sequence belongs to the heat shock protein 90 family. Homodimer.

The protein localises to the cytoplasm. Its function is as follows. Molecular chaperone. Has ATPase activity. This is Chaperone protein HtpG from Buchnera aphidicola subsp. Acyrthosiphon pisum (strain APS) (Acyrthosiphon pisum symbiotic bacterium).